Reading from the N-terminus, the 172-residue chain is Ribosome maturation factor RimM (172 aa).

The 75-residue stretch at 93–167 (DEHEFYYHEI…RVVITPIPGM (75 aa)) folds into the PRC barrel domain.

This sequence belongs to the RimM family. Binds ribosomal protein uS19.

The protein localises to the cytoplasm. In terms of biological role, an accessory protein needed during the final step in the assembly of 30S ribosomal subunit, possibly for assembly of the head region. Essential for efficient processing of 16S rRNA. May be needed both before and after RbfA during the maturation of 16S rRNA. It has affinity for free ribosomal 30S subunits but not for 70S ribosomes. The chain is Ribosome maturation factor RimM from Exiguobacterium sp. (strain ATCC BAA-1283 / AT1b).